The primary structure comprises 1867 residues: TATA-binding protein-associated factor MOT1 (1867 aa).

At S93 the chain carries Phosphoserine. The tract at residues 169–228 is disordered; it reads KTDDIKQETSMLNASDKANENKSNANKKSARMLAMARRKKKMSAKNTPKHPVDITESSVS. Residues 181–203 are compositionally biased toward low complexity; sequence NASDKANENKSNANKKSARMLAM. Residues 195–211 carry the Nuclear localization signal motif; the sequence is KKSARMLAMARRKKKMS. 3 HEAT repeats span residues 289 to 326, 445 to 482, and 541 to 578; these read WQFQ…KHAY, GLLE…EFVK, and WSFK…IKDD. Phosphoserine is present on S677. HEAT repeat units lie at residues 1108–1145 and 1188–1225; these read SEVF…ISSV and PYVI…LVPL. One can recognise a Helicase ATP-binding domain in the interval 1284 to 1457; that stretch reads AFLNKYHLHG…WSLFDFLMPG (174 aa). An ATP-binding site is contributed by 1297-1304; that stretch reads DDMGLGKT. A DEGH box motif is present at residues 1408–1411; the sequence is DEGH. Residues 1495–1537 form an HEAT 6 repeat; that stretch reads ALHKQVLPFMLRRLKEDVLSDLPPKIIQDYYCELGDLQKQLYM. Residues 1639-1787 form the Helicase C-terminal domain; the sequence is PIQNVISQHR…STVVNQQNSG (149 aa). The segment at 1802–1822 is disordered; it reads PDNVTSQDNEEKNNGDSQAAK.

This sequence belongs to the SNF2/RAD54 helicase family. In terms of assembly, forms a complex with TBP which binds TATA DNA with high affinity but with altered specificity.

The protein localises to the mitochondrion. The protein resides in the nucleus. In terms of biological role, regulates transcription in association with TATA binding protein (TBP). Removes TBP from the TATA box via its C-terminal ATPase activity. Both transcription activation and repression require its ATPase activity. The sequence is that of TATA-binding protein-associated factor MOT1 (MOT1) from Saccharomyces cerevisiae (strain ATCC 204508 / S288c) (Baker's yeast).